We begin with the raw amino-acid sequence, 101 residues long: Venom protein 214 (101 aa).

Positions 1-16 (MIRYVLVIITCFLVAA) are cleaved as a signal peptide.

Contains 3 disulfide bonds. Expressed by the venom gland.

It is found in the secreted. The protein is Venom protein 214 of Lychas mucronatus (Chinese swimming scorpion).